A 481-amino-acid polypeptide reads, in one-letter code: Aspartyl/glutamyl-tRNA(Asn/Gln) amidotransferase subunit B (481 aa).

Belongs to the GatB/GatE family. GatB subfamily. As to quaternary structure, heterotrimer of A, B and C subunits.

It catalyses the reaction L-glutamyl-tRNA(Gln) + L-glutamine + ATP + H2O = L-glutaminyl-tRNA(Gln) + L-glutamate + ADP + phosphate + H(+). It carries out the reaction L-aspartyl-tRNA(Asn) + L-glutamine + ATP + H2O = L-asparaginyl-tRNA(Asn) + L-glutamate + ADP + phosphate + 2 H(+). In terms of biological role, allows the formation of correctly charged Asn-tRNA(Asn) or Gln-tRNA(Gln) through the transamidation of misacylated Asp-tRNA(Asn) or Glu-tRNA(Gln) in organisms which lack either or both of asparaginyl-tRNA or glutaminyl-tRNA synthetases. The reaction takes place in the presence of glutamine and ATP through an activated phospho-Asp-tRNA(Asn) or phospho-Glu-tRNA(Gln). This is Aspartyl/glutamyl-tRNA(Asn/Gln) amidotransferase subunit B from Pseudomonas putida (strain ATCC 47054 / DSM 6125 / CFBP 8728 / NCIMB 11950 / KT2440).